A 436-amino-acid chain; its full sequence is Cyclin-dependent kinase 11B (436 aa).

A Nuclear localization signal motif is present at residues 25–30 (VKKNRK). The interval 30 to 44 (KKLVKGLHRAGPPPE) is calmodulin-binding. The 286-residue stretch at 79-364 (FQCLNRIEEG…AEDGLKHEYF (286 aa)) folds into the Protein kinase domain. Residues 85–93 (IEEGTYGVV) and Lys108 each bind ATP. At Ser123 the chain carries Phosphoserine; by CDK7. Thr129 bears the Phosphothreonine; by CDK7 mark. The Proton acceptor role is filled by Asp203. The residue at position 230 (Ser230) is a Phosphoserine. Tyr235 bears the Phosphotyrosine mark. A Phosphothreonine modification is found at Thr236. Lys282 participates in a covalent cross-link: Glycyl lysine isopeptide (Lys-Gly) (interchain with G-Cter in SUMO2). The tract at residues 383-406 (SEQQCVKRGTSPKPPEGGLGYSQL) is disordered. Thr392 bears the Phosphothreonine mark. Position 393 is a phosphoserine (Ser393).

This sequence belongs to the protein kinase superfamily. CMGC Ser/Thr protein kinase family. CDC2/CDKX subfamily. As to quaternary structure, may interact PAK1 and RANBP9. p110C interacts with RNPS1. Interacts with CCND3. Interacts with CCNL1 and CCNL2. Forms complexes with pre-mRNA-splicing factors, including at least SRSF1, SRSF2 AND SRSF7/SLU7. The cofactor is Mg(2+).

It is found in the cytoplasm. It localises to the nucleus membrane. Its subcellular location is the endomembrane system. The protein localises to the perinuclear region. It carries out the reaction L-seryl-[protein] + ATP = O-phospho-L-seryl-[protein] + ADP + H(+). It catalyses the reaction L-threonyl-[protein] + ATP = O-phospho-L-threonyl-[protein] + ADP + H(+). In terms of biological role, plays multiple roles in cell cycle progression, cytokinesis and apoptosis. Involved in pre-mRNA splicing in a kinase activity-dependent manner. May act as a negative regulator of normal cell cycle progression. This chain is Cyclin-dependent kinase 11B (Cdk11b), found in Rattus norvegicus (Rat).